A 571-amino-acid chain; its full sequence is Glutamate--tRNA ligase (571 aa).

The short motif at 110–120 (PNPNGPGTLGS) is the 'HIGH' region element.

Belongs to the class-I aminoacyl-tRNA synthetase family. Glutamate--tRNA ligase type 2 subfamily.

It is found in the cytoplasm. The catalysed reaction is tRNA(Glu) + L-glutamate + ATP = L-glutamyl-tRNA(Glu) + AMP + diphosphate. Functionally, catalyzes the attachment of glutamate to tRNA(Glu) in a two-step reaction: glutamate is first activated by ATP to form Glu-AMP and then transferred to the acceptor end of tRNA(Glu). The chain is Glutamate--tRNA ligase from Methanosarcina acetivorans (strain ATCC 35395 / DSM 2834 / JCM 12185 / C2A).